The following is a 469-amino-acid chain: Neuraminidase (469 aa).

At 1 to 6 (MNPNQK) the chain is on the intravirion side. A helical membrane pass occupies residues 7 to 29 (TITIGSVSLTIATVCFLMQIAIL). Residues 11–33 (GSVSLTIATVCFLMQIAILATTV) are involved in apical transport and lipid raft association. The Virion surface segment spans residues 30–469 (ATTVTLHFKQ…DGANINFMPI (440 aa)). The tract at residues 36–88 (HFKQHECDSPASNQVMPCEPIIIERNITEIVYLNNTTIEKEICPEVVEYRNWS) is hypervariable stalk region. 4 N-linked (GlcNAc...) asparagine; by host glycosylation sites follow: Asn61, Asn69, Asn70, and Asn86. A head of neuraminidase region spans residues 91–469 (QCQITGFAPF…DGANINFMPI (379 aa)). Disulfide bonds link Cys92–Cys417, Cys124–Cys129, Cys183–Cys230, Cys232–Cys237, Cys278–Cys291, Cys280–Cys289, Cys318–Cys337, and Cys421–Cys447. Position 118 (Arg118) interacts with substrate. Asn146 carries N-linked (GlcNAc...) asparagine; by host glycosylation. Asp151 acts as the Proton donor/acceptor in catalysis. Arg152 provides a ligand contact to substrate. N-linked (GlcNAc...) asparagine; by host glycosylation is found at Asn200 and Asn234. 276–277 (EE) contributes to the substrate binding site. Arg292 provides a ligand contact to substrate. Ca(2+) contacts are provided by Asp293, Gly297, and Asp324. The segment at 325–349 (TPRNDDSSSNSNCRDPNNERGNPGV) is disordered. Arg371 provides a ligand contact to substrate. A glycan (N-linked (GlcNAc...) asparagine; by host) is linked at Asn402. The active-site Nucleophile is Tyr406.

Belongs to the glycosyl hydrolase 34 family. Homotetramer. The cofactor is Ca(2+). In terms of processing, N-glycosylated.

The protein resides in the virion membrane. It localises to the host apical cell membrane. It catalyses the reaction Hydrolysis of alpha-(2-&gt;3)-, alpha-(2-&gt;6)-, alpha-(2-&gt;8)- glycosidic linkages of terminal sialic acid residues in oligosaccharides, glycoproteins, glycolipids, colominic acid and synthetic substrates.. Its activity is regulated as follows. Inhibited by the neuraminidase inhibitors zanamivir (Relenza) and oseltamivir (Tamiflu). These drugs interfere with the release of progeny virus from infected cells and are effective against all influenza strains. Resistance to neuraminidase inhibitors is quite rare. Its function is as follows. Catalyzes the removal of terminal sialic acid residues from viral and cellular glycoconjugates. Cleaves off the terminal sialic acids on the glycosylated HA during virus budding to facilitate virus release. Additionally helps virus spread through the circulation by further removing sialic acids from the cell surface. These cleavages prevent self-aggregation and ensure the efficient spread of the progeny virus from cell to cell. Otherwise, infection would be limited to one round of replication. Described as a receptor-destroying enzyme because it cleaves a terminal sialic acid from the cellular receptors. May facilitate viral invasion of the upper airways by cleaving the sialic acid moieties on the mucin of the airway epithelial cells. Likely to plays a role in the budding process through its association with lipid rafts during intracellular transport. May additionally display a raft-association independent effect on budding. Plays a role in the determination of host range restriction on replication and virulence. Sialidase activity in late endosome/lysosome traffic seems to enhance virus replication. The protein is Neuraminidase of Influenza A virus (strain A/RI/5-/1957 H2N2).